The sequence spans 231 residues: NADH-ubiquinone oxidoreductase chain 4 (231 aa).

A run of 6 helical transmembrane segments spans residues 1–21 (PIAGSMVLAAILLKLGGYGII), 34–54 (LFLPFIVLALWGAILANLTCL), 61–80 (SLIAYSSISHMGLVVAAIII), 84–106 (WGLSGAMALMIAHGFTSSALFCL), 128–148 (ILPMATTWWLLANLMNIATPP), and 169–189 (TIILLGLSMLITASYSLHMFL).

The protein belongs to the complex I subunit 4 family.

It is found in the mitochondrion membrane. It catalyses the reaction a ubiquinone + NADH + 5 H(+)(in) = a ubiquinol + NAD(+) + 4 H(+)(out). Its function is as follows. Core subunit of the mitochondrial membrane respiratory chain NADH dehydrogenase (Complex I) that is believed to belong to the minimal assembly required for catalysis. Complex I functions in the transfer of electrons from NADH to the respiratory chain. The immediate electron acceptor for the enzyme is believed to be ubiquinone. This is NADH-ubiquinone oxidoreductase chain 4 (MT-ND4) from Metlapilcoatlus nummifer (Mexican jumping pitviper).